The following is a 230-amino-acid chain: Uracil-DNA glycosylase (230 aa).

Asp-70 serves as the catalytic Proton acceptor.

This sequence belongs to the uracil-DNA glycosylase (UDG) superfamily. UNG family.

The protein localises to the cytoplasm. It catalyses the reaction Hydrolyzes single-stranded DNA or mismatched double-stranded DNA and polynucleotides, releasing free uracil.. Functionally, excises uracil residues from the DNA which can arise as a result of misincorporation of dUMP residues by DNA polymerase or due to deamination of cytosine. The polypeptide is Uracil-DNA glycosylase (Campylobacter concisus (strain 13826)).